We begin with the raw amino-acid sequence, 87 residues long: Small ribosomal subunit protein bS20 (87 aa).

The disordered stretch occupies residues 1 to 22 (MANHKSALKRHKQSLKRAARNR).

This sequence belongs to the bacterial ribosomal protein bS20 family.

Its function is as follows. Binds directly to 16S ribosomal RNA. The sequence is that of Small ribosomal subunit protein bS20 from Nitratidesulfovibrio vulgaris (strain DP4) (Desulfovibrio vulgaris).